A 491-amino-acid polypeptide reads, in one-letter code: Ubiquitin carboxyl-terminal hydrolase 30 (491 aa).

Topologically, residues 1 to 31 (MPWCKQGTTDKLVREFLRTGAAARNKMMKNW) are mitochondrial intermembrane. The chain crosses the membrane as a helical span at residues 32 to 52 (GVIGGIAAAMAAGVYVLWGPI). At 53-491 (SDRRKKRKGM…MQRPGLRVEE (439 aa)) the chain is on the cytoplasmic side. The USP domain occupies 64-482 (PGLLNLGNTC…SAYLLFYERM (419 aa)). The active-site Nucleophile is the cysteine 73. Polar residues predominate over residues 346 to 355 (AQSQQKTSRT). A disordered region spans residues 346–365 (AQSQQKTSRTNKAKASADPK). Histidine 432 serves as the catalytic Proton acceptor.

Belongs to the peptidase C19 family.

The protein resides in the mitochondrion outer membrane. The enzyme catalyses Thiol-dependent hydrolysis of ester, thioester, amide, peptide and isopeptide bonds formed by the C-terminal Gly of ubiquitin (a 76-residue protein attached to proteins as an intracellular targeting signal).. Its function is as follows. Deubiquitinating enzyme that acts as a key inhibitor of mitophagy by counteracting the action of parkin (PRKN). The sequence is that of Ubiquitin carboxyl-terminal hydrolase 30 (usp30) from Danio rerio (Zebrafish).